A 112-amino-acid chain; its full sequence is Large ribosomal subunit protein bL17 (112 aa).

Belongs to the bacterial ribosomal protein bL17 family. Part of the 50S ribosomal subunit. Contacts protein L32.

This Moorella thermoacetica (strain ATCC 39073 / JCM 9320) protein is Large ribosomal subunit protein bL17.